Consider the following 131-residue polypeptide: Small ribosomal subunit protein uS11 (131 aa).

The protein belongs to the universal ribosomal protein uS11 family. As to quaternary structure, part of the 30S ribosomal subunit. Interacts with proteins S7 and S18. Binds to IF-3.

Its function is as follows. Located on the platform of the 30S subunit, it bridges several disparate RNA helices of the 16S rRNA. Forms part of the Shine-Dalgarno cleft in the 70S ribosome. This Buchnera aphidicola subsp. Acyrthosiphon pisum (strain 5A) protein is Small ribosomal subunit protein uS11.